The primary structure comprises 319 residues: Acetyl esterase (319 aa).

The Involved in the stabilization of the negatively charged intermediate by the formation of the oxyanion hole signature appears at histidine 91–glycine 93. Catalysis depends on residues serine 165, aspartate 262, and histidine 292.

This sequence belongs to the 'GDXG' lipolytic enzyme family. Homodimer. Interacts with MalT and MelA.

Its subcellular location is the cytoplasm. Its function is as follows. Displays esterase activity towards short chain fatty esters (acyl chain length of up to 8 carbons). Able to hydrolyze triacetylglycerol (triacetin) and tributyrylglycerol (tributyrin), but not trioleylglycerol (triolein) or cholesterol oleate. Negatively regulates MalT activity by antagonizing maltotriose binding. Inhibits MelA galactosidase activity. In Escherichia coli O81 (strain ED1a), this protein is Acetyl esterase.